Consider the following 1898-residue polypeptide: MAPEPAPGRRMVPLVPALVMLGLMAGAHGDSKPVFVKVPEDQIGLSGGVASFVCQATGEPKPRITWMKKGKKVSSQRFEVIEFDDGAGSVLRIQPLRVQRDEAIYECTATNSLGEINTSAKLSVLEEDQLPSGFPTIDMGPQLKVVEKARTATMLCAAGGNPDPEISWFKDFLPVDPASSNGRIKQLRSGALQIESSEESDQGKYECVATNSAGTRYSAPANLYVRVRRVAPRFSIPPSSQEVMPGGNVNLTCVAVGAPMPYVKWMMGAEELTKEDEMPVGRNVLELSNVMRSANYTCVAISSLGMIEATAQVTVKALPKPPIDLVVTETTATSVTLTWDSGNTEPVSFYGIQYRAAGTDGPFQEVDGVASTRYSIGGLSPFSEYAFRVLAVNSIGRGPPSEAVRARTGEQAPSSPPRRVQARMLSASTMLVQWEPPEEPNGLVRGYRVYYTPDSRRPLSAWHKHNTDAGLLTTVGSLLPGITYSLRVLAFTAVGDGPPSPTIQVKTQQGVPAQPADFQAKAESDTRIQLSWLLPPQERIIKYELVYWAAEDEGQQHKVTFDPTSSYTLEDLKPDTLYHFQLAARSDLGVGVFTPTVEACTAQSTPSAPPQKVTCVSTGSTTVRVSWVPPPADSRNGIITQYSVAYEAVDGEDRKRHVVDGISREHSSWDLLGLEKWTEYRVWVRAHTDVGPGPESSPVLVRTDEDVPSGPPRKVEVEPLNSTAVHVSWKLPVPNKQHGQIRGYQVTYVRLENGEPRGQPIIQDVMLAEAQETTISGLTPETTYSITVAAYTTKGDGARSKPKVVTTTGAVPGRPTMMVSTTAMHTALLQWHPPKELPGELLGYRLQYRRADEARPNTIDFGKDDQHFTVTGLHKGATYIFRLAAKNRAGPGEEFEKEITTPEDAPSGFPQNLRVTGLTTSTTELAWDPPVLAERNGRITNYTVVYRDINSQHELQNVTGDVHLTLLGLKPDTTYDIKVRAHTSKGAGPLSPSIQSRTMPMEQVFAKNFRVAAAMKTSVLLSWEVPDSYKSAVPFKILYNGQSVEVDGHSMRKLIADLQPNTEYSFVLMNRGTSAGGLQHLVSIRTAPDLLPQKPLPASAFIEDGRFSLSMPQVQDPSLVRWFYIVVVPIDRVGGNLLAPRWSTPEELELDELLEAIEQGEEKQRRRRRQAERLKPYVAAQVDELPETFTLGDKKNYRGFYNRPLSPDLSYQCFVLASLKEPMDQKRYASSPYSDEIVVQVTPAQQQEEPEMLWVTGPVLAVILIILIVIAILLFKRKRTHSPSSKDEQSIGLKDSLLAHSSDPVEMRRLNYQTPGMRDHPPIPITDLADNIERLKANDGLKFSQEYESIDPGQQFTWENSNSEVNKPKNRYANVIAYDHSRVLLTSIDGVPGSDYINANYIDGYRKQNAYIATQGPLPETMGDFWRMVWEQRIATVVMMTRLEEKSRVKCDQYWPARGTETYGLIQVTLVDTVELATYTMRTFALHKSGSSEKRELRQFQFMAWPDHGVPEYPTPILAFLRRVKACNPLDAGPMVVHCSAGVGRTGCFIVIDAMLERMKHEKTVDIYGHVTCMRSQRNYMVQTEDQYVFIHEALLEAAMCGHTEVLARNLYAHIQKLGQVPPGESVTAMELEFKLLAGSKARASRFISANLPCNKFKNRLVNIMPYELTRVCLQPIRGVEGSDYINASFLDGYRQQKAYIATQGPLAESTEDFWRMLWEHNSTIIVMLTKLREMGREKCHQYWPAERSARYQYFVVDPMAEYNMPQYILREFKVTDARDGQSRTIRQFQFTDWPEQGVPKTGEGFIDFIGQVHKTKEQFGQDGPITVHCSAGVGRTGVFITLSIVLERMRYEGVVDMFQTVKTLRTQRPAMVQTEDQYQLCYRAALEYLGSFDHYAT.

The N-terminal stretch at 1-29 is a signal peptide; that stretch reads MAPEPAPGRRMVPLVPALVMLGLMAGAHG. Residues 30 to 1254 are Extracellular-facing; it reads DSKPVFVKVP…QQQEEPEMLW (1225 aa). Ig-like C2-type domains follow at residues 33 to 123, 135 to 224, and 232 to 314; these read PVFV…AKLS, PTID…ANLY, and PRFS…AQVT. Cysteine 54 and cysteine 107 are disulfide-bonded. Residue 68 to 77 coordinates heparin; the sequence is KKGKKVSSQR. Asparagine 117 is a glycosylation site (N-linked (GlcNAc...) asparagine). Cysteine 156 and cysteine 207 are joined by a disulfide. 2 N-linked (GlcNAc...) asparagine glycosylation sites follow: asparagine 250 and asparagine 295. Residues cysteine 253 and cysteine 298 are joined by a disulfide bond. 8 consecutive Fibronectin type-III domains span residues 321-411, 416-510, 514-604, 609-706, 711-810, 811-905, 909-1001, and 1005-1089; these read PPID…TGEQ, PPRR…TQQG, QPAD…TAQS, PPQK…TDED, PPRK…TTGA, VPGR…PEDA, FPQN…TMPM, and FAKN…TAPD. Residues 693 to 713 form a disordered region; it reads GPESSPVLVRTDEDVPSGPPR. An N-linked (GlcNAc...) asparagine glycan is attached at asparagine 721. Residues asparagine 941 and asparagine 957 are each glycosylated (N-linked (GlcNAc...) asparagine). Residues 1255 to 1275 form a helical membrane-spanning segment; it reads VTGPVLAVILIILIVIAILLF. At 1276–1898 the chain is on the cytoplasmic side; it reads KRKRTHSPSS…YLGSFDHYAT (623 aa). Serine 1296 bears the Phosphoserine mark. 2 Tyrosine-protein phosphatase domains span residues 1343–1598 and 1630–1889; these read FSQE…LLEA and MELE…ALEY. Substrate-binding positions include aspartate 1507, 1539–1545, and glutamine 1583; that span reads CSAGVGR. Cysteine 1539 (phosphocysteine intermediate) is an active-site residue. Cysteine 1830 functions as the Phosphocysteine intermediate in the catalytic mechanism.

Belongs to the protein-tyrosine phosphatase family. Receptor class 2A subfamily. Interacts with GRIP1. Interacts with PPFIA1, PPFIA2 and PPFIA3. Interacts with PTPRF.

The protein localises to the membrane. It catalyses the reaction O-phospho-L-tyrosyl-[protein] + H2O = L-tyrosyl-[protein] + phosphate. Possible cell adhesion receptor. It possesses an intrinsic protein tyrosine phosphatase activity (PTPase) and dephosphorylates EPHA2 regulating its activity. Functionally, the first PTPase domain has enzymatic activity, while the second one seems to affect the substrate specificity of the first one. The chain is Receptor-type tyrosine-protein phosphatase F (Ptprf) from Rattus norvegicus (Rat).